The sequence spans 223 residues: Deoxyribose-phosphate aldolase (223 aa).

Asp91 acts as the Proton donor/acceptor in catalysis. Lys154 (schiff-base intermediate with acetaldehyde) is an active-site residue. Residue Lys183 is the Proton donor/acceptor of the active site.

Belongs to the DeoC/FbaB aldolase family. DeoC type 1 subfamily.

The protein localises to the cytoplasm. It carries out the reaction 2-deoxy-D-ribose 5-phosphate = D-glyceraldehyde 3-phosphate + acetaldehyde. The protein operates within carbohydrate degradation; 2-deoxy-D-ribose 1-phosphate degradation; D-glyceraldehyde 3-phosphate and acetaldehyde from 2-deoxy-alpha-D-ribose 1-phosphate: step 2/2. Catalyzes a reversible aldol reaction between acetaldehyde and D-glyceraldehyde 3-phosphate to generate 2-deoxy-D-ribose 5-phosphate. The sequence is that of Deoxyribose-phosphate aldolase from Lysinibacillus sphaericus (strain C3-41).